A 252-amino-acid polypeptide reads, in one-letter code: 2-succinyl-6-hydroxy-2,4-cyclohexadiene-1-carboxylate synthase (252 aa).

Belongs to the AB hydrolase superfamily. MenH family. In terms of assembly, monomer.

The enzyme catalyses 5-enolpyruvoyl-6-hydroxy-2-succinyl-cyclohex-3-ene-1-carboxylate = (1R,6R)-6-hydroxy-2-succinyl-cyclohexa-2,4-diene-1-carboxylate + pyruvate. It functions in the pathway quinol/quinone metabolism; 1,4-dihydroxy-2-naphthoate biosynthesis; 1,4-dihydroxy-2-naphthoate from chorismate: step 3/7. The protein operates within quinol/quinone metabolism; menaquinone biosynthesis. Its function is as follows. Catalyzes a proton abstraction reaction that results in 2,5-elimination of pyruvate from 2-succinyl-5-enolpyruvyl-6-hydroxy-3-cyclohexene-1-carboxylate (SEPHCHC) and the formation of 2-succinyl-6-hydroxy-2,4-cyclohexadiene-1-carboxylate (SHCHC). This Salmonella paratyphi A (strain ATCC 9150 / SARB42) protein is 2-succinyl-6-hydroxy-2,4-cyclohexadiene-1-carboxylate synthase.